We begin with the raw amino-acid sequence, 539 residues long: Probable malate:quinone oxidoreductase 3 (539 aa).

Positions 516–539 (LEPPVSPQRPESIRPADSQGVASR) are disordered.

This sequence belongs to the MQO family. It depends on FAD as a cofactor.

The enzyme catalyses (S)-malate + a quinone = a quinol + oxaloacetate. The protein operates within carbohydrate metabolism; tricarboxylic acid cycle; oxaloacetate from (S)-malate (quinone route): step 1/1. The sequence is that of Probable malate:quinone oxidoreductase 3 from Pseudomonas putida (strain ATCC 47054 / DSM 6125 / CFBP 8728 / NCIMB 11950 / KT2440).